The chain runs to 356 residues: UDP-3-O-acylglucosamine N-acyltransferase (356 aa).

Residue H251 is the Proton acceptor of the active site.

This sequence belongs to the transferase hexapeptide repeat family. LpxD subfamily. As to quaternary structure, homotrimer.

The enzyme catalyses a UDP-3-O-[(3R)-3-hydroxyacyl]-alpha-D-glucosamine + a (3R)-hydroxyacyl-[ACP] = a UDP-2-N,3-O-bis[(3R)-3-hydroxyacyl]-alpha-D-glucosamine + holo-[ACP] + H(+). It functions in the pathway bacterial outer membrane biogenesis; LPS lipid A biosynthesis. In terms of biological role, catalyzes the N-acylation of UDP-3-O-acylglucosamine using 3-hydroxyacyl-ACP as the acyl donor. Is involved in the biosynthesis of lipid A, a phosphorylated glycolipid that anchors the lipopolysaccharide to the outer membrane of the cell. This is UDP-3-O-acylglucosamine N-acyltransferase from Ralstonia nicotianae (strain ATCC BAA-1114 / GMI1000) (Ralstonia solanacearum).